Consider the following 163-residue polypeptide: Nucleotide-binding protein Npun_R4736 (163 aa).

Belongs to the YajQ family.

Nucleotide-binding protein. This chain is Nucleotide-binding protein Npun_R4736, found in Nostoc punctiforme (strain ATCC 29133 / PCC 73102).